The chain runs to 309 residues: uncharacterized protein (309 aa).

Belongs to the OprB family.

This is an uncharacterized protein from Aquifex aeolicus (strain VF5).